Here is a 65-residue protein sequence, read N- to C-terminus: Toxin KTx8 (65 aa).

The signal sequence occupies residues M1 to G25. Disulfide bonds link C31-C53, C38-C61, and C42-C63.

The protein belongs to the short scorpion toxin superfamily. Potassium channel inhibitor family. Alpha-KTx 11 subfamily. In terms of tissue distribution, expressed by the venom gland.

Its subcellular location is the secreted. In terms of biological role, this recombinant toxin inhibits the mammalian voltage-gated potassium channels Kv1.3/KCNA3 in vitro with an IC(50) of 26.40 nM. This Lychas mucronatus (Chinese swimming scorpion) protein is Toxin KTx8.